A 510-amino-acid polypeptide reads, in one-letter code: Cytochrome P450 monooxygenase macH (510 aa).

Residues 7–29 (LPVSLWLIAAGTFAVYHAIRAVY) form a helical membrane-spanning segment. A heme-binding site is contributed by Cys-454.

The protein belongs to the cytochrome P450 family. Heme serves as cofactor.

The protein localises to the membrane. It participates in secondary metabolite biosynthesis; terpenoid biosynthesis. Functionally, cytochrome P450 monooxygenase; part of the gene cluster that mediates the biosynthesis of macrophorins, isoprenoid epoxycyclohexenones containing cyclized drimane moieties. The first step of the pathway is the synthesis of 6-methylsalicylic acid (6-MSA) by the polyketide synthase macA. 6-MSA is then converted to m-cresol by the decarboxylase macB. The cytochrome P450 monooxygenase macC then catalyzes the oxidation of m-cresol to toluquinol. Epoxidation of toluquinol is then performed by the short chain dehydrogenase macD, with the help of macE, and a further prenylation by macG leads to 7-deacetoxyyanuthone A. The next step is the hydroxylation of C-22 of 7-deacetoxyyanuthone A by the cytochrome P450 monooxygenase macH to yield 22-deacetylyanuthone A. O-Mevalon transferase macI then attaches mevalon to the hydroxyl group of 22-deacetylyanuthone A to produce yanuthone E. The terpene cyclase macJ catalyzes the cyclization of 22-deacetylyanuthone A to macrophorin A. MacJ is also able to catalyze cyclization of yanuthone E and 7-deacetoxyyanuthone A to their corresponding macrophorins. The macJ products can be further modified by macH and macJ, as well as by the FAD-dependent monooxygenase macF, to produce additional macrophorins, including 4'-oxomacrophorin A, 4'-oxomacrophorin D and 4'-oxomacrophorin E. The protein is Cytochrome P450 monooxygenase macH of Penicillium terrestre.